The sequence spans 58 residues: UPF0391 membrane protein OCAR_5266/OCA5_c27040 (58 aa).

2 consecutive transmembrane segments (helical) span residues 4–24 and 30–50; these read WVVT…GGIA and IAKI…VVGL.

The protein belongs to the UPF0391 family.

The protein localises to the cell membrane. This Afipia carboxidovorans (strain ATCC 49405 / DSM 1227 / KCTC 32145 / OM5) (Oligotropha carboxidovorans) protein is UPF0391 membrane protein OCAR_5266/OCA5_c27040.